The sequence spans 504 residues: GTPase Der (504 aa).

An EngA-type G 1 domain is found at 4–168 (PVVALVGRPN…QVLAPFAEKM (165 aa)). GTP is bound by residues 10-17 (GRPNVGKS), 57-61 (DTGGI), and 120-123 (NKTD). The segment covering 168–179 (MENADENDRTSE) has biased composition (basic and acidic residues). A disordered region spans residues 168–191 (MENADENDRTSEEEQDEWEQEFDF). The span at 180–191 (EEQDEWEQEFDF) shows a compositional bias: acidic residues. The EngA-type G 2 domain maps to 216–389 (IKIAIVGRPN…SIKEAYACAT (174 aa)). Residues 222 to 229 (GRPNVGKS), 269 to 273 (DTAGV), and 334 to 337 (NKWD) each bind GTP. The KH-like domain occupies 390-474 (QKMTTSLLTR…PIRLLFQEGS (85 aa)).

Belongs to the TRAFAC class TrmE-Era-EngA-EngB-Septin-like GTPase superfamily. EngA (Der) GTPase family. Associates with the 50S ribosomal subunit.

Functionally, GTPase that plays an essential role in the late steps of ribosome biogenesis. This Haemophilus influenzae (strain ATCC 51907 / DSM 11121 / KW20 / Rd) protein is GTPase Der.